We begin with the raw amino-acid sequence, 280 residues long: Putative transcription factor kapC (280 aa).

Residues 1-102 (MQPALAPHPS…GKRPLSTSKR (102 aa)) form a disordered region. Over residues 39–49 (PQPPAPQPPHM) the composition is skewed to pro residues. The span at 79-89 (TQPDVTGQETP) shows a compositional bias: polar residues. The 64-residue stretch at 96–159 (PLSTSKRAAQ…EYIINLQSRL (64 aa)) folds into the bZIP domain. Positions 97–120 (LSTSKRAAQNRAAQRAFRQRKEAH) are basic motif. Positions 124 to 155 (LEGKVKAYENMGEAIKALQAENYQLREYIINL) are leucine-zipper. Residues 169–280 (LPGNIDLSQP…EQTHGLPLIS (112 aa)) form a disordered region. Pro residues predominate over residues 197–211 (APPPTAPQQPQPPHA).

It belongs to the bZIP family.

The protein localises to the nucleus. Its function is as follows. Putative transcription factor. The chain is Putative transcription factor kapC (kapC) from Neosartorya fischeri (strain ATCC 1020 / DSM 3700 / CBS 544.65 / FGSC A1164 / JCM 1740 / NRRL 181 / WB 181) (Aspergillus fischerianus).